The chain runs to 319 residues: Beta-ketoacyl-[acyl-carrier-protein] synthase III (319 aa).

Catalysis depends on residues Cys-113 and His-246. An ACP-binding region spans residues 247–251 (QANIR). Asn-276 is a catalytic residue.

Belongs to the thiolase-like superfamily. FabH family. Homodimer.

The protein localises to the cytoplasm. It carries out the reaction malonyl-[ACP] + acetyl-CoA + H(+) = 3-oxobutanoyl-[ACP] + CO2 + CoA. Its pathway is lipid metabolism; fatty acid biosynthesis. In terms of biological role, catalyzes the condensation reaction of fatty acid synthesis by the addition to an acyl acceptor of two carbons from malonyl-ACP. Catalyzes the first condensation reaction which initiates fatty acid synthesis and may therefore play a role in governing the total rate of fatty acid production. Possesses both acetoacetyl-ACP synthase and acetyl transacylase activities. Its substrate specificity determines the biosynthesis of branched-chain and/or straight-chain of fatty acids. The protein is Beta-ketoacyl-[acyl-carrier-protein] synthase III of Ehrlichia chaffeensis (strain ATCC CRL-10679 / Arkansas).